The following is a 528-amino-acid chain: ATP synthase subunit alpha 1 (528 aa).

Position 169–176 (169–176 (GDRQTGKT)) interacts with ATP.

Belongs to the ATPase alpha/beta chains family. In terms of assembly, F-type ATPases have 2 components, CF(1) - the catalytic core - and CF(0) - the membrane proton channel. CF(1) has five subunits: alpha(3), beta(3), gamma(1), delta(1), epsilon(1). CF(0) has three main subunits: a(1), b(2) and c(9-12). The alpha and beta chains form an alternating ring which encloses part of the gamma chain. CF(1) is attached to CF(0) by a central stalk formed by the gamma and epsilon chains, while a peripheral stalk is formed by the delta and b chains.

It localises to the cell membrane. It catalyses the reaction ATP + H2O + 4 H(+)(in) = ADP + phosphate + 5 H(+)(out). In terms of biological role, produces ATP from ADP in the presence of a proton gradient across the membrane. The alpha chain is a regulatory subunit. The chain is ATP synthase subunit alpha 1 from Mycoplasmopsis pulmonis (strain UAB CTIP) (Mycoplasma pulmonis).